We begin with the raw amino-acid sequence, 304 residues long: Peptidyl-prolyl cis-trans isomerase FKBP35 (304 aa).

The region spanning 37–126 (GNEVTVHYVG…LFEIELLSFR (90 aa)) is the PPIase FKBP-type domain. 3 TPR repeats span residues 144–177 (AFDI…FIHT), 194–227 (ISCN…DKNN), and 228–261 (VKAL…NPNN).

The protein belongs to the FKBP-type PPIase family. Homodimer. Interacts (via TPR repeats) with HSP90 (probably via MEEVD motif).

It localises to the cytoplasm. Its subcellular location is the nucleus. The catalysed reaction is [protein]-peptidylproline (omega=180) = [protein]-peptidylproline (omega=0). Its activity is regulated as follows. Inhibited by FK506 and its derivates, such as ascomycin, and rapamycin. FK506 and rapamycin inhibit peptidylprolyl isomerase activity but not chaperone activity. Inhibited by N-(2-ethyl-phenyl)-2-(3H-imidazao [4, 5-b] pyridin-2-yl-sulfanyl)-acetamide (D44). Not inhibited by cyclosporin A. Inhibition of calcineurin phosphatase activity is enhanced by FK506. In terms of biological role, has peptidylprolyl isomerase (PPIase) and co-chaperone activities. Assists protein folding by catalyzing the peptidyl conversion of cis and trans rotamers of the prolyl amide bond of protein substrates. Inhibits calcineurin phosphatase activity in vitro. Plays an essential role in merozoite egress from host erythrocytes. The protein is Peptidyl-prolyl cis-trans isomerase FKBP35 of Plasmodium falciparum (isolate 3D7).